Consider the following 931-residue polypeptide: Chitin synthase III (931 aa).

Residues Asn37 and Asn94 are each glycosylated (N-linked (GlcNAc...) asparagine). Residues 93 to 154 form a disordered region; sequence PNASQLPPAG…PGGVGQAGGL (62 aa). Positions 102–122 are enriched in gly residues; the sequence is GSGGFGDNGFGQYGQPQGFGG. Asn558 carries an N-linked (GlcNAc...) asparagine glycan. 5 helical membrane passes run 585–605, 644–664, 677–697, 731–751, and 759–779; these read FFLH…WFSL, IINA…FILA, IASF…SGYL, VILI…FLYL, and SFPY…VYAF. N-linked (GlcNAc...) asparagine glycosylation is present at Asn802. 2 helical membrane passes run 858–878 and 899–919; these read TGLV…ITSD and FLLY…LWFL.

This sequence belongs to the chitin synthase family. Class III subfamily. As to expression, highly expressed in conidia and during appressorium formation.

The protein resides in the cell membrane. The enzyme catalyses [(1-&gt;4)-N-acetyl-beta-D-glucosaminyl](n) + UDP-N-acetyl-alpha-D-glucosamine = [(1-&gt;4)-N-acetyl-beta-D-glucosaminyl](n+1) + UDP + H(+). Its function is as follows. Polymerizes chitin, a structural polymer of the cell wall and septum, by transferring the sugar moiety of UDP-GlcNAc to the non-reducing end of the growing chitin polymer. Contributes to the production of conidia and the ability of fungal conidia to germinate. Involved in the fungal cell wall integrity and the ability of conidia to withstand biophysical pressure. Required for appressorium formation and evasion of insect cellular and/or humoral defenses, promoting the fungal dimorphic transition to the production of hyphal bodies that occurs within hosts, and ultimately to virulence. The polypeptide is Chitin synthase III (Metarhizium acridum (strain CQMa 102)).